Reading from the N-terminus, the 131-residue chain is Mediator of RNA polymerase II transcription subunit 31 (131 aa).

N-acetylalanine is present on A2.

Belongs to the Mediator complex subunit 31 family. In terms of assembly, component of the Mediator complex, which is composed of MED1, MED4, MED6, MED7, MED8, MED9, MED10, MED11, MED12, MED13, MED13L, MED14, MED15, MED16, MED17, MED18, MED19, MED20, MED21, MED22, MED23, MED24, MED25, MED26, MED27, MED29, MED30, MED31, CCNC, CDK8 and CDC2L6/CDK11. The MED12, MED13, CCNC and CDK8 subunits form a distinct module termed the CDK8 module. Mediator containing the CDK8 module is less active than Mediator lacking this module in supporting transcriptional activation. Individual preparations of the Mediator complex lacking one or more distinct subunits have been variously termed ARC, CRSP, DRIP, PC2, SMCC and TRAP.

Its subcellular location is the nucleus. Component of the Mediator complex, a coactivator involved in the regulated transcription of nearly all RNA polymerase II-dependent genes. Mediator functions as a bridge to convey information from gene-specific regulatory proteins to the basal RNA polymerase II transcription machinery. Mediator is recruited to promoters by direct interactions with regulatory proteins and serves as a scaffold for the assembly of a functional preinitiation complex with RNA polymerase II and the general transcription factors. The protein is Mediator of RNA polymerase II transcription subunit 31 (MED31) of Bos taurus (Bovine).